Here is an 84-residue protein sequence, read N- to C-terminus: Small ribosomal subunit protein bS20 (84 aa).

A disordered region spans residues 1–32; that stretch reads MPRHESAKKRMRQNEKRQKRNKSQKSRVRTKI.

It belongs to the bacterial ribosomal protein bS20 family.

Binds directly to 16S ribosomal RNA. The polypeptide is Small ribosomal subunit protein bS20 (Salinibacter ruber (strain DSM 13855 / M31)).